The following is a 1325-amino-acid chain: Bile salt export pump (1325 aa).

Residues 1 to 62 lie on the Cytoplasmic side of the membrane; it reads MSDAVILRSV…FSSTTDIWLM (62 aa). The ABC transmembrane type-1 1 domain occupies 62–385; sequence MFVGSLCAFL…ASSCLEAFAT (324 aa). The chain crosses the membrane as a helical span at residues 63–83; the sequence is FVGSLCAFLHGLSHPGVLLIF. Topologically, residues 84-147 are extracellular; it reads GTMTDVFIAY…MIKFASYYAG (64 aa). N-linked (GlcNAc...) asparagine glycosylation is found at asparagine 109, asparagine 116, asparagine 122, and asparagine 125. Residues 148 to 168 form a helical membrane-spanning segment; sequence IALLVLITGYIQICFWVIAAA. At 169–240 the chain is on the cytoplasmic side; sequence RQIQKMRKIS…FLLGFYQGWK (72 aa). The chain crosses the membrane as a helical span at residues 241 to 261; sequence LTLVIISVSPLIGIGAAIIGL. At 262 to 319 the chain is on the extracellular side; that stretch reads SVSKFTDYELKAYAKAGSVADEVISSMRTVAAFGGEKKEVERYEKNLVFAQRWGIRKG. Residues 320 to 340 traverse the membrane as a helical segment; the sequence is IVMGFFTGFMWCLIFLCYALA. Residues 341 to 353 lie on the Cytoplasmic side of the membrane; that stretch reads FWYGSKLVLEDGE. The helical transmembrane segment at 354–374 threads the bilayer; it reads YTAGTLVQIFLSILLGALNLG. Asparagine 375, asparagine 424, and asparagine 440 each carry an N-linked (GlcNAc...) asparagine glycan. Topologically, residues 375-759 are extracellular; the sequence is NASSCLEAFA…KFNAPEWPYM (385 aa). The ABC transporter 1 domain occupies 420-656; it reads IEFHNVTFHY…KGVYFTLVTL (237 aa). 455 to 462 serves as a coordination point for ATP; the sequence is GSSGSGKS. A glycan (N-linked (GlcNAc...) asparagine) is linked at asparagine 591. The ABC transmembrane type-1 2 domain maps to 759–1047; that stretch reads MLFGAVGAAV…ASSYTPSYAK (289 aa). The helical transmembrane segment at 760–780 threads the bilayer; the sequence is LFGAVGAAVNGSVTPLYAFLF. At 781–798 the chain is on the cytoplasmic side; the sequence is SQILGTFSLPDKEEQRSQ. Residues 799 to 819 form a helical membrane-spanning segment; that stretch reads INGVCLLFVAVGCVSLCTQFL. Residues 820-894 lie on the Extracellular side of the membrane; the sequence is QGYAFAKSGE…NSFTNVTVAM (75 aa). An N-linked (GlcNAc...) asparagine glycan is attached at asparagine 889. A helical transmembrane segment spans residues 895-915; sequence IIAFFFSWKLSLVIMCFFPFL. The Cytoplasmic portion of the chain corresponds to 916-983; it reads ALSGALQTRM…PFKTAFRKAN (68 aa). A helical membrane pass occupies residues 984–1004; it reads VYGFCFGFSQCIVFVANSASY. Residues 1005-1014 are Extracellular-facing; that stretch reads RYGGYLIPNE. The chain crosses the membrane as a helical span at residues 1015–1035; it reads GLHFSYVFRVISSVVLSATAL. Over 1036–1325 the chain is Cytoplasmic; the sequence is GRASSYTPSY…KLVTTGAPIS (290 aa). Positions 1082–1320 constitute an ABC transporter 2 domain; that stretch reads VDFVDCKFTY…KGAYYKLVTT (239 aa). 1117–1124 serves as a coordination point for ATP; sequence GSSGCGKS.

This sequence belongs to the ABC transporter superfamily. ABCB family. Multidrug resistance exporter (TC 3.A.1.201) subfamily. In terms of assembly, interacts with HAX1. Interacts with the adapter protein complex 2 (AP-2) throught AP2A2 or AP2A1; this interaction regulates cell membrane expression of ABCB11 through its internalization in a clathrin-dependent manner and its subsequent degradation. In terms of processing, N-glycosylated. Ubiquitinated; short-chain ubiquitination regulates cell-Surface expression of ABCB11. In terms of tissue distribution, liver.

It is found in the apical cell membrane. The protein localises to the recycling endosome membrane. It localises to the endosome. Its subcellular location is the cell membrane. It carries out the reaction cholate(in) + ATP + H2O = cholate(out) + ADP + phosphate + H(+). It catalyses the reaction taurocholate(in) + ATP + H2O = taurocholate(out) + ADP + phosphate + H(+). The enzyme catalyses glycocholate(in) + ATP + H2O = glycocholate(out) + ADP + phosphate + H(+). The catalysed reaction is glycochenodeoxycholate(in) + ATP + H2O = glycochenodeoxycholate(out) + ADP + phosphate + H(+). It carries out the reaction taurochenodeoxycholate(in) + ATP + H2O = taurochenodeoxycholate(out) + ADP + phosphate + H(+). It catalyses the reaction glycoursodeoxycholate(in) + ATP + H2O = glycoursodeoxycholate(out) + ADP + phosphate + H(+). The enzyme catalyses tauroursodeoxycholate(in) + ATP + H2O = tauroursodeoxycholate(out) + ADP + phosphate + H(+). The catalysed reaction is taurodeoxycholate(in) + ATP + H2O = taurodeoxycholate(out) + ADP + phosphate + H(+). It carries out the reaction taurolithocholate 3-sulfate(in) + ATP + H2O = taurolithocholate 3-sulfate(out) + ADP + phosphate + H(+). It catalyses the reaction pravastatin(in) + ATP + H2O = pravastatin(out) + ADP + phosphate + H(+). The uptake of taurocholate is inhibited by taurolithocholate sulfate with an IC(50) of 9 uM. Pravastatin competitively inhibits the transport of taurocholic acid. Cyclosporin A, glibenclamide, rifampicin and troglitazonestrongly competitively inhibit the transport activity of taurocholate. The canalicular transport activity of taurocholate is strongly dependent on canalicular membrane cholesterol content. The uptake of taurocholate is increased by short- and medium-chain fatty acids. Cholesterol increases transport capacity of taurocholate without affecting the affinity for the substrate. Catalyzes the transport of the major hydrophobic bile salts, such as taurine and glycine-conjugated cholic acid across the canalicular membrane of hepatocytes in an ATP-dependent manner, therefore participates in hepatic bile acid homeostasis and consequently to lipid homeostasis through regulation of biliary lipid secretion in a bile salts dependent manner. Transports taurine-conjugated bile salts more rapidly than glycine-conjugated bile salts. Also transports non-bile acid compounds, such as pravastatin and fexofenadine in an ATP-dependent manner and may be involved in their biliary excretion. This Canis lupus familiaris (Dog) protein is Bile salt export pump.